Here is a 1353-residue protein sequence, read N- to C-terminus: Protein prickle (1353 aa).

Disordered regions lie at residues 130–206 (VDDG…TKRN), 266–292 (QEEE…PPLP), and 500–540 (AKYS…SAHA). Residues 147–165 (TPTATATAGRPLFPLSSSP) show a composition bias toward low complexity. Residues 166–178 (RRSKKLLRSLRAH) are compositionally biased toward basic residues. The span at 179-189 (VKGESRPEKPA) shows a compositional bias: basic and acidic residues. Residues 514–532 (LSPALSTPSPPSLLHHPAA) show a composition bias toward low complexity. Residues 548-656 (MDMQRQSHSD…NVRQLMSARP (109 aa)) enclose the PET domain. LIM zinc-binding domains lie at 655–719 (RPCD…ETLK), 720–780 (PRCS…MFAE), and 781–843 (YCDY…GEPP). 3 disordered regions span residues 840–892 (GEPP…HQAS), 933–962 (HCRS…NMSP), and 1062–1303 (ADIM…SSSS). Over residues 861-892 (TQRVRPQTRITSSHASSSPPMSPQQQQQHQAS) the composition is skewed to low complexity. Polar residues-rich tracts occupy residues 952-962 (RASSTSHNMSP) and 1111-1120 (SLNTPLSAHS). Positions 1130 to 1142 (SILSGASSSSPMS) are enriched in low complexity. Residues 1177 to 1205 (GDKDRDRDRERDRDRDRDKGGDKDRESGR) show a composition bias toward basic and acidic residues. 2 stretches are compositionally biased toward basic residues: residues 1207–1220 (GPGH…RRKS) and 1228–1240 (NHHR…RSHS). The segment covering 1269–1284 (ETAHKSPRQQRERERE) has biased composition (basic and acidic residues).

It belongs to the prickle / espinas / testin family. In terms of assembly, interacts with dsh; PET and LIM domains interact with dsh DEP domain, in wing cells. Interacts with Vang in photoreceptor cells.

The protein resides in the cell membrane. Acts in a planar cell polarity (PCP) complex; polarization along the apical/basal axis of epithelial cells. PCP signaling in the wing disk requires the receptor fz and the cytoplasmic proteins dsh and pk. These act in a feedback loop leading to activation of the jnk cascade and subsequent polarized arrangement of hairs and bristles. Dgo and pk compete with one another for dsh binding, thereby modulating fz dsh activity and ensuring tight control over fz PCP signaling. Vang, stan and pk function together to regulate the establishment of tissue polarity in the adult eye. The sequence is that of Protein prickle from Drosophila pseudoobscura pseudoobscura (Fruit fly).